A 78-amino-acid chain; its full sequence is D-alanyl carrier protein (78 aa).

One can recognise a Carrier domain in the interval 1–77 (MAVKEEVVEI…KVIAKVESLI (77 aa)). Residue serine 35 is modified to O-(pantetheine 4'-phosphoryl)serine.

This sequence belongs to the DltC family. 4'-phosphopantetheine is transferred from CoA to a specific serine of apo-DCP.

Its subcellular location is the cytoplasm. It functions in the pathway cell wall biogenesis; lipoteichoic acid biosynthesis. Carrier protein involved in the D-alanylation of lipoteichoic acid (LTA). The loading of thioester-linked D-alanine onto DltC is catalyzed by D-alanine--D-alanyl carrier protein ligase DltA. The DltC-carried D-alanyl group is further transferred to cell membrane phosphatidylglycerol (PG) by forming an ester bond, probably catalyzed by DltD. D-alanylation of LTA plays an important role in modulating the properties of the cell wall in Gram-positive bacteria, influencing the net charge of the cell wall. In Leuconostoc citreum (strain KM20), this protein is D-alanyl carrier protein.